The following is a 429-amino-acid chain: Adenylosuccinate synthetase (429 aa).

Residues 12–18 (GDEGKGK) and 40–42 (GHT) contribute to the GTP site. The active-site Proton acceptor is the Asp13. Mg(2+) contacts are provided by Asp13 and Gly40. Residues 13–16 (DEGK), 38–41 (NAGH), Thr128, Arg142, Gln223, Thr238, and Arg302 contribute to the IMP site. His41 (proton donor) is an active-site residue. Substrate is bound at residue 298 to 304 (TTTGRPR). GTP is bound by residues Arg304, 330 to 332 (SID), and 412 to 414 (SVG).

This sequence belongs to the adenylosuccinate synthetase family. As to quaternary structure, homodimer. The cofactor is Mg(2+).

It is found in the cytoplasm. It catalyses the reaction IMP + L-aspartate + GTP = N(6)-(1,2-dicarboxyethyl)-AMP + GDP + phosphate + 2 H(+). Its pathway is purine metabolism; AMP biosynthesis via de novo pathway; AMP from IMP: step 1/2. Plays an important role in the de novo pathway of purine nucleotide biosynthesis. Catalyzes the first committed step in the biosynthesis of AMP from IMP. The protein is Adenylosuccinate synthetase of Bacillus cereus (strain ATCC 10987 / NRS 248).